A 190-amino-acid chain; its full sequence is Coat protein (190 aa).

The protein belongs to the potexvirus capsid protein family.

The protein resides in the virion. Required for genome encapsidation. Forms ribonucleoprotein complexes along with TGB1 helicase and viral RNA. This White clover mosaic virus (strain M) (WCMV) protein is Coat protein.